The following is a 556-amino-acid chain: DNA ligase B (556 aa).

The active-site N6-AMP-lysine intermediate is K126.

The protein belongs to the NAD-dependent DNA ligase family. LigB subfamily.

It catalyses the reaction NAD(+) + (deoxyribonucleotide)n-3'-hydroxyl + 5'-phospho-(deoxyribonucleotide)m = (deoxyribonucleotide)n+m + AMP + beta-nicotinamide D-nucleotide.. Its function is as follows. Catalyzes the formation of phosphodiester linkages between 5'-phosphoryl and 3'-hydroxyl groups in double-stranded DNA using NAD as a coenzyme and as the energy source for the reaction. The polypeptide is DNA ligase B (Stutzerimonas stutzeri (strain A1501) (Pseudomonas stutzeri)).